Consider the following 352-residue polypeptide: MNGTEGPNFYIPMSNITGVVRSPFEYPQYYLAEPWAYTILAAYMFTLILLGFPVNFLTLYVTIEHKKLRTPLNYILLNLAVANLFMVFGGFTTTVYTSMHGYFVFGETGCNLEGYFATLGGEISLWSLVVLAIERWVVVCKPMSNFRFGENHAIMGLAFTWIMANSCAMPPLFGWSRYIPEGMQCSCGVDYYTLKPEVNNESFVIYMFIVHFSVPLTIISFCYGRLVCTVKEAAAQQQESETTQRAEREVTRMVVIMVIAFLVCWVPYASVAWYIFTHQGSTFGPVFMTVPSFFAKSSAIYNPLIYICLNSQFRNCMITTLFCGKNPFQEEEGASTTASKTEASSVSSVSPA.

The Extracellular segment spans residues 1–36; that stretch reads MNGTEGPNFYIPMSNITGVVRSPFEYPQYYLAEPWA. N-linked (GlcNAc...) asparagine glycans are attached at residues Asn-2 and Asn-15. Residues 37 to 61 form a helical membrane-spanning segment; the sequence is YTILAAYMFTLILLGFPVNFLTLYV. Topologically, residues 62–73 are cytoplasmic; that stretch reads TIEHKKLRTPLN. The helical transmembrane segment at 74–98 threads the bilayer; it reads YILLNLAVANLFMVFGGFTTTVYTS. Residues 99-113 lie on the Extracellular side of the membrane; it reads MHGYFVFGETGCNLE. An intrachain disulfide couples Cys-110 to Cys-187. The helical transmembrane segment at 114–133 threads the bilayer; it reads GYFATLGGEISLWSLVVLAI. Residues 134 to 152 are Cytoplasmic-facing; the sequence is ERWVVVCKPMSNFRFGENH. The helical transmembrane segment at 153 to 176 threads the bilayer; that stretch reads AIMGLAFTWIMANSCAMPPLFGWS. Over 177-202 the chain is Extracellular; sequence RYIPEGMQCSCGVDYYTLKPEVNNES. N-linked (GlcNAc...) asparagine glycosylation is present at Asn-200. A helical membrane pass occupies residues 203 to 230; sequence FVIYMFIVHFSVPLTIISFCYGRLVCTV. Residues 231-252 lie on the Cytoplasmic side of the membrane; it reads KEAAAQQQESETTQRAEREVTR. A helical membrane pass occupies residues 253–276; the sequence is MVVIMVIAFLVCWVPYASVAWYIF. Over 277–284 the chain is Extracellular; sequence THQGSTFG. Residues 285-309 traverse the membrane as a helical segment; sequence PVFMTVPSFFAKSSAIYNPLIYICL. Position 296 is an N6-(retinylidene)lysine (Lys-296). Residues 310–352 are Cytoplasmic-facing; sequence NSQFRNCMITTLFCGKNPFQEEEGASTTASKTEASSVSSVSPA. Residue Cys-323 is the site of S-palmitoyl cysteine attachment. The tract at residues 333–352 is disordered; it reads GASTTASKTEASSVSSVSPA. Low complexity predominate over residues 334 to 352; sequence ASTTASKTEASSVSSVSPA.

It belongs to the G-protein coupled receptor 1 family. Opsin subfamily. Post-translationally, phosphorylated on some or all of the serine and threonine residues present in the C-terminal region. Rod shaped photoreceptor cells which mediates vision in dim light.

The protein localises to the membrane. In terms of biological role, visual pigments such as rhodopsin and porphyropsin are light-absorbing molecules that mediate vision. Rhodopsin consists of an apoprotein, opsin, covalently linked to 11-cis-retinal. This receptor is coupled to the activation of phospholipase C. Porphyropsin consists of opsin covalently linked to 11-cis 3,4-didehydroretinal. This Anguilla anguilla (European freshwater eel) protein is Rhodopsin, deep-sea form.